The following is a 157-amino-acid chain: Endoribonuclease YbeY (157 aa).

Positions 118, 122, and 128 each coordinate Zn(2+).

This sequence belongs to the endoribonuclease YbeY family. It depends on Zn(2+) as a cofactor.

Its subcellular location is the cytoplasm. Functionally, single strand-specific metallo-endoribonuclease involved in late-stage 70S ribosome quality control and in maturation of the 3' terminus of the 16S rRNA. The chain is Endoribonuclease YbeY from Shewanella loihica (strain ATCC BAA-1088 / PV-4).